The primary structure comprises 602 residues: Elongation factor 4 (602 aa).

The 183-residue stretch at 7–189 folds into the tr-type G domain; that stretch reads RNIRNFSIIA…AIVQRIPAPQ (183 aa). Residues 19 to 24 and 136 to 139 contribute to the GTP site; these read DHGKST and NKID.

The protein belongs to the TRAFAC class translation factor GTPase superfamily. Classic translation factor GTPase family. LepA subfamily.

It is found in the cell inner membrane. The enzyme catalyses GTP + H2O = GDP + phosphate + H(+). In terms of biological role, required for accurate and efficient protein synthesis under certain stress conditions. May act as a fidelity factor of the translation reaction, by catalyzing a one-codon backward translocation of tRNAs on improperly translocated ribosomes. Back-translocation proceeds from a post-translocation (POST) complex to a pre-translocation (PRE) complex, thus giving elongation factor G a second chance to translocate the tRNAs correctly. Binds to ribosomes in a GTP-dependent manner. This chain is Elongation factor 4, found in Xylella fastidiosa (strain M23).